Reading from the N-terminus, the 142-residue chain is Hemoglobin subunit alpha-A (142 aa).

In terms of domain architecture, Globin spans 2 to 142 (VLSAADKTNV…VGAVLTAKYR (141 aa)). His-59 lines the O2 pocket. His-88 serves as a coordination point for heme b.

This sequence belongs to the globin family. In terms of assembly, heterotetramer of two alpha chains and two beta chains. In terms of tissue distribution, red blood cells.

Functionally, involved in oxygen transport from the lung to the various peripheral tissues. This is Hemoglobin subunit alpha-A (HBAA) from Anas platyrhynchos platyrhynchos (Northern mallard).